A 4588-amino-acid polypeptide reads, in one-letter code: Protocadherin Fat 1 (4588 aa).

The N-terminal stretch at 1–21 is a signal peptide; sequence MGRHLALLLLLLLLFQHFGDS. Residues 22-4181 lie on the Extracellular side of the membrane; it reads DGSQRLEQTP…STPWNIGLAE (4160 aa). Cadherin domains follow at residues 35–149 and 150–257; these read THLE…RPLF and SPTS…APVI. N40 is a glycosylation site (N-linked (GlcNAc...) asparagine). Residue N333 is glycosylated (N-linked (GlcNAc...) asparagine). Cadherin domains lie at 368 to 463, 464 to 569, 570 to 673, 718 to 822, 823 to 927, 928 to 1034, 1035 to 1139, 1140 to 1245, 1246 to 1357, 1359 to 1456, 1457 to 1562, 1563 to 1667, 1668 to 1765, 1766 to 1879, 1880 to 1979, 1980 to 2081, 2082 to 2182, 2183 to 2283, 2284 to 2390, 2391 to 2492, 2493 to 2596, 2597 to 2703, 2704 to 2809, 2810 to 2918, 2919 to 3023, 3024 to 3125, 3126 to 3230, 3231 to 3335, 3336 to 3440, 3441 to 3545, and 3546 to 3647; these read EKDV…PPEF, TQTA…TPLF, EKIN…VNLQ, STLP…PPEF, LQES…PPTF, IPPN…PPVF, SSFV…APQT, SEPV…KPQF, LQKF…EPIS, EESF…RPQF, STSK…APWF, TASS…SPKF, TSKE…APVF, MQAE…PPVF, AKPL…HLKF, TQDV…APVF, VNLP…MPVF, EKPF…PPVF, AQQS…PPLF, EQQI…SPAF, LQNE…APQF, RATK…LPKF, SEPF…SPVF, ESSP…PPRF, TAEI…SPVC, EKTL…APEF, SADP…PPVF, EYRE…TPVF, SQDT…APVF, SRGN…PPAI, and LPLE…AIRF. N-linked (GlcNAc...) asparagine glycans are attached at residues N660, N740, and N791. N-linked (GlcNAc...) asparagine glycosylation occurs at N998. Residues N1426 and N1551 are each glycosylated (N-linked (GlcNAc...) asparagine). N-linked (GlcNAc...) asparagine glycans are attached at residues N1748, N1864, N1902, N1940, and N1991. N-linked (GlcNAc...) asparagine glycosylation is found at N2325 and N2464. N-linked (GlcNAc...) asparagine glycosylation is found at N3324, N3422, N3444, N3613, N3640, and N3716. Residues 3790-3827 enclose the EGF-like 1 domain; it reads VHHGCEDDPCPEGSECVSDPWEEKHTCVCPSGRFGQCP. Intrachain disulfides connect C3794/C3805, C3799/C3816, C3818/C3826, C3976/C4009, C4017/C4028, C4022/C4038, C4040/C4049, C4056/C4067, C4061/C4076, C4078/C4087, C4093/C4104, C4098/C4113, C4115/C4124, C4131/C4142, and C4136/C4151. The region spanning 3829–4009 is the Laminin G-like domain; the sequence is SSSMTLTGNS…EESVDVSPGC (181 aa). EGF-like domains are found at residues 4013–4050, 4052–4088, and 4089–4125; these read ATED…THCE, SVNP…QRCQ, and LSPY…ERCQ. The EGF-like 5; calcium-binding domain occupies 4127 to 4163; it reads DIDECSGNPCLHGALCENTHGSYHCNCSHEYRGRHCE. N4152 is a glycosylation site (N-linked (GlcNAc...) asparagine). A disulfide bridge connects residues C4153 and C4162. A helical membrane pass occupies residues 4182–4202; sequence GIGIVVFVAGIFLLVVVFVLC. Residues 4203–4588 are Cytoplasmic-facing; it reads RKMISRKKKH…PLDSQQHTEV (386 aa). Positions 4204-4214 match the Nuclear localization signal motif; the sequence is KMISRKKKHQA. Disordered regions lie at residues 4255–4275, 4303–4327, and 4343–4376; these read SYTP…SFEG, SVAP…QKPS, and LSKK…SESC. Residues 4256–4265 are compositionally biased toward polar residues; sequence YTPSIPSDSR. A compositionally biased stretch (polar residues) spans 4363–4374; it reads SEVQSLSSFQSE. The short motif at 4378-4382 is the PTB-like motif element; it reads DNGYH. Disordered regions lie at residues 4435 to 4479 and 4565 to 4588; these read FPPP…SSSR and ESGD…HTEV.

In terms of assembly, interacts (via the C-terminus 4300-4400 AA) with ATN1. Interacts with RERE. In terms of processing, undergoes proteolytic cleavage. The extracellular domain is cleaved off and the cytoplasmic domain (about 400 AA) shuttles to the nucleus. In terms of tissue distribution, expressed in many epithelial and some endothelial and smooth muscle cells.

The protein resides in the cell membrane. Its subcellular location is the nucleus. Functionally, plays an essential role for cellular polarization, directed cell migration and modulating cell-cell contact. This is Protocadherin Fat 1 (FAT1) from Homo sapiens (Human).